The following is a 277-amino-acid chain: Adenylate kinase (277 aa).

72 to 77 (GAGKGT) contacts ATP. Residues 92–121 (ATGDMLRSQVAKQTALGVQAKKIMDQGGLV) form an NMP region. AMP contacts are provided by residues threonine 93, arginine 98, 119–121 (GLV), 148–151 (GFPR), and glutamine 155. The segment at 189 to 226 (GRLVHPASGRSYHKLFNPPKVAMTDDVTGDPLVQRSDD) is LID. ATP is bound by residues arginine 190 and 199–200 (SY). AMP contacts are provided by arginine 223 and arginine 234. Glutamine 262 is an ATP binding site.

The protein belongs to the adenylate kinase family. AK2 subfamily. Monomer.

It localises to the cytoplasm. The protein localises to the cytosol. It is found in the mitochondrion intermembrane space. It carries out the reaction AMP + ATP = 2 ADP. Its function is as follows. Catalyzes the reversible transfer of the terminal phosphate group between ATP and AMP. Plays an important role in cellular energy homeostasis and in adenine nucleotide metabolism. Adenylate kinase activity is critical for regulation of the phosphate utilization and the AMP de novo biosynthesis pathways. The chain is Adenylate kinase from Eremothecium gossypii (strain ATCC 10895 / CBS 109.51 / FGSC 9923 / NRRL Y-1056) (Yeast).